Consider the following 287-residue polypeptide: Phosphatidylserine decarboxylase proenzyme (287 aa).

Active-site charge relay system; for autoendoproteolytic cleavage activity residues include D90, H147, and S252. The Schiff-base intermediate with substrate; via pyruvic acid; for decarboxylase activity role is filled by S252. S252 bears the Pyruvic acid (Ser); by autocatalysis mark.

The protein belongs to the phosphatidylserine decarboxylase family. PSD-B subfamily. Prokaryotic type I sub-subfamily. In terms of assembly, heterodimer of a large membrane-associated beta subunit and a small pyruvoyl-containing alpha subunit. The cofactor is pyruvate. Is synthesized initially as an inactive proenzyme. Formation of the active enzyme involves a self-maturation process in which the active site pyruvoyl group is generated from an internal serine residue via an autocatalytic post-translational modification. Two non-identical subunits are generated from the proenzyme in this reaction, and the pyruvate is formed at the N-terminus of the alpha chain, which is derived from the carboxyl end of the proenzyme. The autoendoproteolytic cleavage occurs by a canonical serine protease mechanism, in which the side chain hydroxyl group of the serine supplies its oxygen atom to form the C-terminus of the beta chain, while the remainder of the serine residue undergoes an oxidative deamination to produce ammonia and the pyruvoyl prosthetic group on the alpha chain. During this reaction, the Ser that is part of the protease active site of the proenzyme becomes the pyruvoyl prosthetic group, which constitutes an essential element of the active site of the mature decarboxylase.

Its subcellular location is the cell membrane. The enzyme catalyses a 1,2-diacyl-sn-glycero-3-phospho-L-serine + H(+) = a 1,2-diacyl-sn-glycero-3-phosphoethanolamine + CO2. The protein operates within phospholipid metabolism; phosphatidylethanolamine biosynthesis; phosphatidylethanolamine from CDP-diacylglycerol: step 2/2. Functionally, catalyzes the formation of phosphatidylethanolamine (PtdEtn) from phosphatidylserine (PtdSer). This chain is Phosphatidylserine decarboxylase proenzyme, found in Pseudomonas putida (strain W619).